The sequence spans 312 residues: MKVAVLGAAGGIGQALALLLKNQLPSGSELSLYDIAPVTPGVAVDLSHIPTAVKIKGFSGEDATPALEGADVVLISAGVARRPGMDRSDLFNVNAGIVKNLVQQIAKTCPKACVGIITNPVNTTVAIAAEVLKKAGVYDKNKLFGVTTLDIIRSNTFVAELKGKLPTEVEVPVIGGHSGVTILPLLSQIPGVSFTEQEAAELTKRIQNAGTEVVEAKAGGGSATLSMGQAAARFGLSLVRALQGEKGVVECAYVEGDGQYARFFSQPLLLGKNGVEERKSIGTLSAFEQHSLDAMLDTLKKDIQLGEDFINK.

Residues 7–13 and D34 contribute to the NAD(+) site; that span reads GAAGGIG. R81 and R87 together coordinate substrate. Residues N94 and 117 to 119 each bind NAD(+); that span reads ITN. Substrate is bound by residues N119 and R153. H177 serves as the catalytic Proton acceptor. M227 serves as a coordination point for NAD(+).

Belongs to the LDH/MDH superfamily. MDH type 1 family. In terms of assembly, homodimer.

It carries out the reaction (S)-malate + NAD(+) = oxaloacetate + NADH + H(+). In terms of biological role, catalyzes the reversible oxidation of malate to oxaloacetate. The chain is Malate dehydrogenase from Salmonella dublin (strain CT_02021853).